A 131-amino-acid polypeptide reads, in one-letter code: Peptidyl-prolyl cis-trans isomerase NIMA-interacting 4 (131 aa).

The tract at residues 1–25 (MPPKGKSGSGKGGKGGAASGSDSAD) is necessary for nuclear localization and DNA-binding. Residues 1-39 (MPPKGKSGSGKGGKGGAASGSDSADKKSQGPKGGGNAVK) are disordered. Residues 1-41 (MPPKGKSGSGKGGKGGAASGSDSADKKSQGPKGGGNAVKVR) are necessary for association with the pre-rRNP complexes. The segment covering 7 to 18 (SGSGKGGKGGAA) has biased composition (gly residues). S19 bears the Phosphoserine; by CK2 mark. The PpiC domain maps to 35 to 129 (GNAVKVRHIL…FGYHIIMVEG (95 aa)).

This sequence belongs to the PpiC/parvulin rotamase family. PIN4 subfamily. In terms of assembly, found in pre-ribosomal ribonucleoprotein (pre-rRNP) complexes. In terms of processing, phosphorylated. Phosphorylation occurs both in the nucleus and the cytoplasm. Phosphorylation at Ser-19 does not affect its PPIase activity but is required for nuclear localization, and the dephosphorylation is a prerequisite for the binding to DNA. The unphosphorylated form associates with the pre-rRNP complexes in the nucleus.

It localises to the nucleus. It is found in the nucleolus. The protein localises to the cytoplasm. The protein resides in the cytoskeleton. Its subcellular location is the spindle. It catalyses the reaction [protein]-peptidylproline (omega=180) = [protein]-peptidylproline (omega=0). Involved as a ribosomal RNA processing factor in ribosome biogenesis. Binds to tightly bent AT-rich stretches of double-stranded DNA. The chain is Peptidyl-prolyl cis-trans isomerase NIMA-interacting 4 (Pin4) from Mus musculus (Mouse).